The following is an 884-amino-acid chain: Protein P (884 aa).

The terminal protein domain (TP) stretch occupies residues 1 to 184; sequence MHPFSRLFRN…GKPYSWEHRQ (184 aa). Positions 185-387 are spacer; the sequence is LVQHNGQQHK…YCIHHIVSSL (203 aa). Residues 299–345 are disordered; sequence RNSGHTTWFSSASNSNKSRSREKAYSSNSTSKRYSPPLNYEKSDFSS. The segment at 388 to 729 is polymerase/reverse transcriptase domain (RT); the sequence is DDWGPCTVTG…YEELWPVVRQ (342 aa). One can recognise a Reverse transcriptase domain in the interval 398–639; sequence DVTIKSPRTP…NHLHFMGYVI (242 aa). Mg(2+)-binding residues include aspartate 470, aspartate 590, and aspartate 591.

The protein belongs to the hepadnaviridae P protein family.

It catalyses the reaction DNA(n) + a 2'-deoxyribonucleoside 5'-triphosphate = DNA(n+1) + diphosphate. It carries out the reaction Endonucleolytic cleavage to 5'-phosphomonoester.. With respect to regulation, activated by host HSP70 and HSP40 in vitro to be able to bind the epsilon loop of the pgRNA. Because deletion of the RNase H region renders the protein partly chaperone-independent, the chaperones may be needed indirectly to relieve occlusion of the RNA-binding site by this domain. Inhibited by several reverse-transcriptase inhibitors: Lamivudine, Adefovir and Entecavir. In terms of biological role, multifunctional enzyme that converts the viral RNA genome into dsDNA in viral cytoplasmic capsids. This enzyme displays a DNA polymerase activity that can copy either DNA or RNA templates, and a ribonuclease H (RNase H) activity that cleaves the RNA strand of RNA-DNA heteroduplexes in a partially processive 3'- to 5'-endonucleasic mode. Neo-synthesized pregenomic RNA (pgRNA) are encapsidated together with the P protein, and reverse-transcribed inside the nucleocapsid. Initiation of reverse-transcription occurs first by binding the epsilon loop on the pgRNA genome, and is initiated by protein priming, thereby the 5'-end of (-)DNA is covalently linked to P protein. Partial (+)DNA is synthesized from the (-)DNA template and generates the relaxed circular DNA (RC-DNA) genome. After budding and infection, the RC-DNA migrates in the nucleus, and is converted into a plasmid-like covalently closed circular DNA (cccDNA). The activity of P protein does not seem to be necessary for cccDNA generation, and is presumably released from (+)DNA by host nuclear DNA repair machinery. This chain is Protein P, found in Marmota monax (Woodchuck).